We begin with the raw amino-acid sequence, 471 residues long: Threonine--tRNA ligase catalytic subunit (471 aa).

The interval 8–333 (THIDYAYELD…YLEHRRGRMP (326 aa)) is catalytic. Residues cysteine 112, histidine 166, and histidine 310 each contribute to the Zn(2+) site.

Belongs to the class-II aminoacyl-tRNA synthetase family. Homodimer. Probably interacts with its editing subunit. The cofactor is Zn(2+).

The protein resides in the cytoplasm. It carries out the reaction tRNA(Thr) + L-threonine + ATP = L-threonyl-tRNA(Thr) + AMP + diphosphate + H(+). Catalyzes the attachment of threonine to tRNA(Thr) in a two-step reaction: L-threonine is first activated by ATP to form Thr-AMP and then transferred to the acceptor end of tRNA(Thr). This protein is probably not able to deacylate mischarged L-seryl-tRNA(Thr) as it lacks the appropriate domain. This chain is Threonine--tRNA ligase catalytic subunit, found in Aeropyrum pernix (strain ATCC 700893 / DSM 11879 / JCM 9820 / NBRC 100138 / K1).